Reading from the N-terminus, the 384-residue chain is Alanine racemase (384 aa).

The active-site Proton acceptor; specific for D-alanine is the Lys46. At Lys46 the chain carries N6-(pyridoxal phosphate)lysine. Arg144 is a substrate binding site. Tyr278 functions as the Proton acceptor; specific for L-alanine in the catalytic mechanism. Substrate is bound at residue Met326.

It belongs to the alanine racemase family. Requires pyridoxal 5'-phosphate as cofactor.

The enzyme catalyses L-alanine = D-alanine. Its pathway is amino-acid biosynthesis; D-alanine biosynthesis; D-alanine from L-alanine: step 1/1. Its function is as follows. Catalyzes the interconversion of L-alanine and D-alanine. May also act on other amino acids. This chain is Alanine racemase (alr), found in Frankia casuarinae (strain DSM 45818 / CECT 9043 / HFP020203 / CcI3).